Here is a 148-residue protein sequence, read N- to C-terminus: Urease accessory protein UreE (148 aa).

Belongs to the UreE family.

Its subcellular location is the cytoplasm. In terms of biological role, involved in urease metallocenter assembly. Binds nickel. Probably functions as a nickel donor during metallocenter assembly. The sequence is that of Urease accessory protein UreE from Bacillus sp. (strain TB-90).